We begin with the raw amino-acid sequence, 311 residues long: Terpentetriene synthase (311 aa).

The short motif at 77-81 is the DDXXD motif element; that stretch reads DDRWD.

The protein belongs to the terpene synthase family. In terms of assembly, homodimer. Mg(2+) serves as cofactor.

It carries out the reaction terpentedienyl diphosphate = terpentetriene + diphosphate. Its pathway is antibiotic biosynthesis. In terms of biological role, involved in the production of the isoprenoid antibiotic terpentecin. Converts terpentedienol diphosphate (TDP) into terpentetriene (TTE). Can also accept geranylgeranyl diphosphate (GGDP) and farnesyl diphosphate (FDP) as substrates. The protein is Terpentetriene synthase (cyc2) of Kitasatospora griseola (Streptomyces griseolosporeus).